A 315-amino-acid polypeptide reads, in one-letter code: ATP synthase gamma chain (315 aa).

This sequence belongs to the ATPase gamma chain family. As to quaternary structure, F-type ATPases have 2 components, CF(1) - the catalytic core - and CF(0) - the membrane proton channel. CF(1) has five subunits: alpha(3), beta(3), gamma(1), delta(1), epsilon(1). CF(0) has three main subunits: a, b and c.

The protein resides in the cellular thylakoid membrane. Functionally, produces ATP from ADP in the presence of a proton gradient across the membrane. The gamma chain is believed to be important in regulating ATPase activity and the flow of protons through the CF(0) complex. The sequence is that of ATP synthase gamma chain from Microcystis aeruginosa (strain NIES-843 / IAM M-2473).